The following is a 315-amino-acid chain: Protoheme IX farnesyltransferase (315 aa).

Helical transmembrane passes span 32–52 (VMSL…GHMN), 53–73 (PVLA…SGAL), 93–113 (IPAG…LSAF), 120–140 (LMVN…YAVI), 153–173 (IVIG…AATG), 180–200 (LVLF…LSLF), 226–246 (ALFY…MGFA), 249–269 (FYGV…WRLW), and 295–315 (IFAV…FGVF).

It belongs to the UbiA prenyltransferase family. Protoheme IX farnesyltransferase subfamily.

Its subcellular location is the cell inner membrane. The enzyme catalyses heme b + (2E,6E)-farnesyl diphosphate + H2O = Fe(II)-heme o + diphosphate. Its pathway is porphyrin-containing compound metabolism; heme O biosynthesis; heme O from protoheme: step 1/1. Functionally, converts heme B (protoheme IX) to heme O by substitution of the vinyl group on carbon 2 of heme B porphyrin ring with a hydroxyethyl farnesyl side group. This Brucella suis (strain ATCC 23445 / NCTC 10510) protein is Protoheme IX farnesyltransferase.